The primary structure comprises 94 residues: Small ribosomal subunit protein bS18 (94 aa).

The protein belongs to the bacterial ribosomal protein bS18 family. In terms of assembly, part of the 30S ribosomal subunit. Forms a tight heterodimer with protein bS6.

Functionally, binds as a heterodimer with protein bS6 to the central domain of the 16S rRNA, where it helps stabilize the platform of the 30S subunit. The protein is Small ribosomal subunit protein bS18 of Polaromonas sp. (strain JS666 / ATCC BAA-500).